Reading from the N-terminus, the 624-residue chain is Coagulation factor XI (624 aa).

A signal peptide spans 1–18 (MTSLHQVLYFIFFASVSS). Apple domains follow at residues 20 to 103 (CVTK…FKQC), 110 to 193 (CSKD…LKSC), 200 to 283 (CIRD…LQHC), and 291 to 376 (CHPS…LRLC). 17 disulfide bridges follow: cysteine 20–cysteine 103, cysteine 46–cysteine 76, cysteine 50–cysteine 56, cysteine 110–cysteine 193, cysteine 136–cysteine 165, cysteine 140–cysteine 146, cysteine 200–cysteine 283, cysteine 226–cysteine 255, cysteine 230–cysteine 236, cysteine 291–cysteine 376, cysteine 317–cysteine 348, cysteine 321–cysteine 327, cysteine 382–cysteine 499, cysteine 415–cysteine 431, cysteine 513–cysteine 580, cysteine 544–cysteine 559, and cysteine 570–cysteine 598. N-linked (GlcNAc...) asparagine glycosylation is found at asparagine 90 and asparagine 126. Asparagine 297 carries N-linked (GlcNAc...) asparagine glycosylation. The Peptidase S1 domain maps to 390–622 (VVGGAASVHG…YVDWILEKTQ (233 aa)). Histidine 430 functions as the Charge relay system in the catalytic mechanism. Asparagine 449 carries an N-linked (GlcNAc...) asparagine glycan. Aspartate 479 functions as the Charge relay system in the catalytic mechanism. Asparagine 490 is a glycosylation site (N-linked (GlcNAc...) asparagine). 547–550 (RYRR) lines the heparin pocket. The Charge relay system role is filled by serine 574.

It belongs to the peptidase S1 family. Plasma kallikrein subfamily. As to quaternary structure, homodimer; disulfide-linked. After activation the heavy and light chains are also linked by a disulfide bond. Interacts (activated) with F9 (inactive and activated) in calcium-dependent manner. Forms a heterodimer with SERPINA5. Activated by factor XIIa (or XII), which cleaves each polypeptide after Arg-389 into the light chain, which contains the active site, and the heavy chain, which associates with high molecular weight (HMW) kininogen. Activated by F12 (activated); the presence of negatively charged surfaces accelerates activation. Activated by F2 (thrombin); the presence of negatively charged surfaces, such as polyphosphate and dextran sulfate, strongly accelerates activation. Autoactivated; the presence of negatively charged surfaces, such as polyphosphate and dextran sulfate, accelerates autoactivation and autolysis. In terms of processing, N-glycosylated on both chains. N-glycosylated sites mainly consist of nonfucosylated sialylated biantennary (in high abundance) and/or triantennary (in low abundance) complex structures.

The protein localises to the secreted. It carries out the reaction Selective cleavage of Arg-|-Ala and Arg-|-Val bonds in factor IX to form factor IXa.. Its activity is regulated as follows. Inhibited by SERPINA5. Its function is as follows. Factor XI triggers the middle phase of the intrinsic pathway of blood coagulation by activating factor IX. The sequence is that of Coagulation factor XI (F11) from Mus musculus (Mouse).